A 921-amino-acid chain; its full sequence is Collagen alpha-1(IX) chain (921 aa).

A signal peptide spans 1-23; it reads MKTCWKIPVFFFVCSFLEPWASA. Residues 24-268 are nonhelical region (NC4); it reads AVKRRPRFPV…ITPSQTTDER (245 aa). 2 disulfides stabilise this stretch: Cys44–Cys242 and Cys198–Cys252. Residues 50-244 form the Laminin G-like domain; the sequence is GQDDLPGFDL…LQWMLIHCDP (195 aa). N-linked (GlcNAc...) asparagine glycosylation is present at Asn171. Zn(2+)-binding residues include Asp213, Asp215, and His253. Disordered regions lie at residues 254–759 and 783–905; these read ELPA…APTD and RPDS…EPAS. 8 consecutive Collagen-like domains span residues 269–324, 325–356, 358–403, 416–472, 473–516, 587–643, 655–712, and 713–755; these read GPPG…TPGA, DGLT…GFPG, GIPG…GTIG, PPGR…GLRG, ITGI…AGPK, EKGS…GKLG, GPPG…GEPG, and LRGP…PPGR. A triple-helical region (COL3) region spans residues 269-405; it reads GPPGEQGPPG…PGPRGTIGFH (137 aa). Composition is skewed to pro residues over residues 273–285 and 298–307; these read EQGP…PPGV and KGPPGPPGPA. A compositionally biased stretch (low complexity) spans 368–383; that stretch reads TAGLPGELGRVGPVGD. Over residues 387 to 398 the composition is skewed to pro residues; sequence RGPPGPPGPPGP. The nonhelical region (NC3) stretch occupies residues 406 to 417; the sequence is DGDPLCPNACPP. The interval 418–756 is triple-helical region (COL2); it reads GRSGYPGLPG…PGVQGPPGRA (339 aa). The segment covering 479–489 has biased composition (basic and acidic residues); the sequence is DKGEKGARGLD. 2 stretches are compositionally biased toward low complexity: residues 602–621 and 630–650; these read NSGK…RGPQ and LGPV…SPGL. Positions 757–786 are nonhelical region (NC2); it reads PTDQHIKQVCMRVIQEHFAEMAASLKRPDS. Residues 787 to 901 are triple-helical region (COL1); the sequence is GATGLPGRPG…PGPPGLPGFC (115 aa). 2 Collagen-like domains span residues 790–847 and 848–899; these read GLPG…GPPG and RGPN…GLPG. Pro residues predominate over residues 794–804; the sequence is RPGPPGPPGPP. The span at 833–845 shows a compositional bias: basic and acidic residues; it reads PKGDLGEKGERGP. The span at 888–897 shows a compositional bias: pro residues; that stretch reads VPGPPGPPGL. The interval 902–921 is nonhelical region (NC1); sequence EPASCTMQAGQRAFNKGPDP.

The protein belongs to the fibril-associated collagens with interrupted helices (FACIT) family. In terms of assembly, heterotrimer of an alpha 1(IX), an alpha 2(IX) and an alpha 3(IX) chain. In terms of processing, covalently linked to the telopeptides of type II collagen by lysine-derived cross-links. Prolines at the third position of the tripeptide repeating unit (G-X-Y) are hydroxylated in some or all of the chains.

The protein resides in the secreted. It localises to the extracellular space. Its subcellular location is the extracellular matrix. Structural component of hyaline cartilage and vitreous of the eye. This is Collagen alpha-1(IX) chain (COL9A1) from Homo sapiens (Human).